The primary structure comprises 365 residues: MGSTGETQMTPTQVSDEEANLFAMQLASASVLPMVLKAAIELDLLEIMAKAGPGAFLSPNDLASQLPTKNPEAPVMLDRMLRLLASYSILTYSLRTLPDGKVERLYGLGPVCKFLTKNEDGVSIAALCLMNQDKVLVESWYHLKDAVLDGGIPFNKAYGMTAFDYHGTDPRFNKVFNKGMADHSTITMKKILETYKGFEGLTSIVDVGGGTGAVVNMIVSKYPSIKGINFDLPHVIEDAPQYPGVQHVGGDMFVSVPKGDAIFMKWICHDWSDEHCLKFLKNCYAALPDNGKVILGECILPVAPDTSLATKGVVHIDVVMLAHNPGGKERTEQEFEALAKGSGFQGIRVACNAFNTYVIEFLKKI.

Substrate is bound at residue 130-136 (MNQDKVL). Residues 162-180 (AFDYHGTDPRFNKVFNKGM) form a substrate binding region. Residues glycine 208, aspartate 231, aspartate 251, methionine 252, and lysine 265 each contribute to the S-adenosyl-L-methionine site. Residue histidine 269 is the Proton acceptor of the active site.

It belongs to the class I-like SAM-binding methyltransferase superfamily. Cation-independent O-methyltransferase family. COMT subfamily. As to quaternary structure, homodimer.

The catalysed reaction is (E)-caffeate + S-adenosyl-L-methionine = (E)-ferulate + S-adenosyl-L-homocysteine + H(+). It functions in the pathway aromatic compound metabolism; phenylpropanoid biosynthesis. Functionally, catalyzes the conversion of caffeic acid to ferulic acid and of 5-hydroxyferulic acid to sinapic acid. The resulting products may subsequently be converted to the corresponding alcohols that are incorporated into lignins. This chain is Caffeic acid 3-O-methyltransferase (COMT1), found in Rosa chinensis (China rose).